The chain runs to 78 residues: Small ribosomal subunit protein bS21A (78 aa).

Residues 30–52 (MKARSAYEKPSEKRAREKGEAVR) are compositionally biased toward basic and acidic residues. The interval 30 to 78 (MKARSAYEKPSEKRAREKGEAVRRQRKLARKKLQREGLLPAPKKAVRAR) is disordered. The segment covering 53–62 (RQRKLARKKL) has biased composition (basic residues).

This sequence belongs to the bacterial ribosomal protein bS21 family.

This chain is Small ribosomal subunit protein bS21A, found in Rhizobium etli (strain ATCC 51251 / DSM 11541 / JCM 21823 / NBRC 15573 / CFN 42).